The sequence spans 501 residues: Sodium-coupled neutral amino acid symporter 2 (501 aa).

The segment at 1-26 (MSSAEMGKFDISPDEDSSSYSSNSND) is disordered. Residues 1-77 (MSSAEMGKFD…HPGTTSFGMS (77 aa)) are Cytoplasmic-facing. The interval 1 to 97 (MSSAEMGKFD…SGILGLSYAM (97 aa)) is regulates protein turnover upon amino acid deprivation. A helical membrane pass occupies residues 78 to 97 (VFNLSNAIVGSGILGLSYAM). Position 83 (N83) interacts with Na(+). The Extracellular portion of the chain corresponds to 98–103 (ANTGIA). A helical transmembrane segment spans residues 104 to 124 (LFVILLLVVSILSLYSVHLLL). Topologically, residues 125–159 (KTANEGGSLLYEQLGMKAFGMPGKLAASGSITMQN) are cytoplasmic. Residues 160-178 (IGAMSSYLFIVKYELPLVI) traverse the membrane as a helical segment. The Extracellular portion of the chain corresponds to 179–189 (KTFMNIEENAG). The helical transmembrane segment at 190-210 (HWYLNGDYLVLLVSVILILPL) threads the bilayer. Topologically, residues 211 to 218 (SLLKNLGY) are cytoplasmic. A helical membrane pass occupies residues 219-239 (LGYTSGFSLLCMVFFLIVVIW). Over 240–287 (KMFQIPCPMESDIINATLINATLAPFADENITISDACKPEYFIFNSQT) the chain is Extracellular. The cysteines at positions 246 and 276 are disulfide-linked. Residues N254 and N259 are each glycosylated (N-linked (GlcNAc...) asparagine). The chain crosses the membrane as a helical span at residues 288 to 308 (VYAVPILTFSFVCHPAILPIY). Topologically, residues 309 to 324 (EELKSRSRKRMMNVSY) are cytoplasmic. A helical membrane pass occupies residues 325–345 (VSFFAMFLMYLLAALFGYLTF). Residues 346–366 (YGRVESELLHTYSAFLGADIL) lie on the Extracellular side of the membrane. A helical membrane pass occupies residues 367–387 (LLIVRLAVLMAVTLTVPVVIF). T381 lines the Na(+) pocket. The Cytoplasmic portion of the chain corresponds to 388–408 (PIRSSVTQLLWAGKEFSWWRH). The chain crosses the membrane as a helical span at residues 409 to 429 (CSITVVLLAFTNVLVIFVPTI). The Extracellular segment spans residues 430-431 (RD). A helical transmembrane segment spans residues 432–452 (IFGFIGASAAAMLIFILPSAF). Residues 453–467 (YIKLVKKEPMKSVQK) are Cytoplasmic-facing. A helical transmembrane segment spans residues 468–490 (IGAALFFLSGILVMTGCMTLIIL). The Extracellular segment spans residues 491–501 (DWIHTDASDGH).

The protein belongs to the amino acid/polyamine transporter 2 family.

The protein resides in the cell membrane. It catalyses the reaction L-alanine(in) + Na(+)(in) = L-alanine(out) + Na(+)(out). It carries out the reaction glycine(in) + Na(+)(in) = glycine(out) + Na(+)(out). The catalysed reaction is L-serine(in) + Na(+)(in) = L-serine(out) + Na(+)(out). The enzyme catalyses L-proline(in) + Na(+)(in) = L-proline(out) + Na(+)(out). It catalyses the reaction L-methionine(in) + Na(+)(in) = L-methionine(out) + Na(+)(out). It carries out the reaction L-histidine(in) + Na(+)(in) = L-histidine(out) + Na(+)(out). The catalysed reaction is L-asparagine(in) + Na(+)(in) = L-asparagine(out) + Na(+)(out). The enzyme catalyses L-glutamine(in) + Na(+)(in) = L-glutamine(out) + Na(+)(out). It catalyses the reaction L-threonine(in) + Na(+)(in) = L-threonine(out) + Na(+)(out). It carries out the reaction L-leucine(in) + Na(+)(in) = L-leucine(out) + Na(+)(out). The catalysed reaction is L-phenylalanine(in) + Na(+)(in) = L-phenylalanine(out) + Na(+)(out). Its activity is regulated as follows. Inhibited by N-methyl-D-glucamine. Inhibited by choline. Allosteric regulation of sodium ions binding by pH. Functionally, symporter that cotransports neutral amino acids and sodium ions from the extracellular to the intracellular side of the cell membrane. The transport is pH-sensitive, Li(+)-intolerant, electrogenic, driven by the Na(+) electrochemical gradient and cotransports of neutral amino acids and sodium ions with a stoichiometry of 1:1. This is Sodium-coupled neutral amino acid symporter 2 from Gallus gallus (Chicken).